Consider the following 69-residue polypeptide: UPF0337 protein ECA0631 (69 aa).

The protein belongs to the UPF0337 (CsbD) family.

The protein is UPF0337 protein ECA0631 of Pectobacterium atrosepticum (strain SCRI 1043 / ATCC BAA-672) (Erwinia carotovora subsp. atroseptica).